A 132-amino-acid polypeptide reads, in one-letter code: Protein MrkF (132 aa).

It is found in the fimbrium. In terms of biological role, appears to affect the stability of the intact fimbriae on the cell surface. This chain is Protein MrkF (mrkF), found in Klebsiella pneumoniae.